The sequence spans 412 residues: Multifunctional CCA protein (412 aa).

Residues glycine 8 and arginine 11 each contribute to the ATP site. The CTP site is built by glycine 8 and arginine 11. Residues aspartate 21 and aspartate 23 each contribute to the Mg(2+) site. Arginine 91, arginine 137, and arginine 140 together coordinate ATP. Arginine 91, arginine 137, and arginine 140 together coordinate CTP. Positions threonine 225–tyrosine 326 constitute an HD domain.

This sequence belongs to the tRNA nucleotidyltransferase/poly(A) polymerase family. Bacterial CCA-adding enzyme type 1 subfamily. In terms of assembly, monomer. Can also form homodimers and oligomers. Mg(2+) serves as cofactor. Requires Ni(2+) as cofactor.

It catalyses the reaction a tRNA precursor + 2 CTP + ATP = a tRNA with a 3' CCA end + 3 diphosphate. The catalysed reaction is a tRNA with a 3' CCA end + 2 CTP + ATP = a tRNA with a 3' CCACCA end + 3 diphosphate. Its function is as follows. Catalyzes the addition and repair of the essential 3'-terminal CCA sequence in tRNAs without using a nucleic acid template. Adds these three nucleotides in the order of C, C, and A to the tRNA nucleotide-73, using CTP and ATP as substrates and producing inorganic pyrophosphate. tRNA 3'-terminal CCA addition is required both for tRNA processing and repair. Also involved in tRNA surveillance by mediating tandem CCA addition to generate a CCACCA at the 3' terminus of unstable tRNAs. While stable tRNAs receive only 3'-terminal CCA, unstable tRNAs are marked with CCACCA and rapidly degraded. The chain is Multifunctional CCA protein from Nitrosomonas europaea (strain ATCC 19718 / CIP 103999 / KCTC 2705 / NBRC 14298).